Reading from the N-terminus, the 218-residue chain is Nuclear cap-binding protein subunit 2 (218 aa).

Residues Tyr24, Tyr49, 118-122 (TIDLD), 129-133 (RQFGR), and 139-140 (QV) contribute to the mRNA site. The RRM domain maps to 46 to 124 (ATIYVGNLSF…REITIDLDPG (79 aa)). Residues 176 to 194 (DPHKNHHHHHHGHHHHHGQ) are compositionally biased toward basic residues. Residues 176-200 (DPHKNHHHHHHGHHHHHGQPHAAAA) form a disordered region.

This sequence belongs to the RRM NCBP2 family. As to quaternary structure, component of the nuclear cap-binding complex (CBC).

The protein resides in the nucleus. In terms of biological role, component of the cap-binding complex (CBC) involved in the nuclear export of capped U snRNAs. The CBC complex is required for efficient pre-mRNA splicing through efficient commitment complex and spliceosome formation; and involved in rRNA processing at sites A0, A1 and A2. The protein is Nuclear cap-binding protein subunit 2 (CBC2) of Eremothecium gossypii (strain ATCC 10895 / CBS 109.51 / FGSC 9923 / NRRL Y-1056) (Yeast).